A 156-amino-acid chain; its full sequence is ATP synthase subunit b (156 aa).

Residues 7-29 (LIGQLIAFALFTWFCVKFVWPPI) form a helical membrane-spanning segment.

Belongs to the ATPase B chain family. In terms of assembly, F-type ATPases have 2 components, F(1) - the catalytic core - and F(0) - the membrane proton channel. F(1) has five subunits: alpha(3), beta(3), gamma(1), delta(1), epsilon(1). F(0) has three main subunits: a(1), b(2) and c(10-14). The alpha and beta chains form an alternating ring which encloses part of the gamma chain. F(1) is attached to F(0) by a central stalk formed by the gamma and epsilon chains, while a peripheral stalk is formed by the delta and b chains.

It is found in the cell inner membrane. In terms of biological role, f(1)F(0) ATP synthase produces ATP from ADP in the presence of a proton or sodium gradient. F-type ATPases consist of two structural domains, F(1) containing the extramembraneous catalytic core and F(0) containing the membrane proton channel, linked together by a central stalk and a peripheral stalk. During catalysis, ATP synthesis in the catalytic domain of F(1) is coupled via a rotary mechanism of the central stalk subunits to proton translocation. Functionally, component of the F(0) channel, it forms part of the peripheral stalk, linking F(1) to F(0). In Actinobacillus succinogenes (strain ATCC 55618 / DSM 22257 / CCUG 43843 / 130Z), this protein is ATP synthase subunit b.